The following is a 562-amino-acid chain: Arginine--tRNA ligase (562 aa).

Residues 136 to 146 (ANPTGPMHMGN) carry the 'HIGH' region motif.

Belongs to the class-I aminoacyl-tRNA synthetase family. In terms of assembly, monomer.

Its subcellular location is the cytoplasm. It carries out the reaction tRNA(Arg) + L-arginine + ATP = L-arginyl-tRNA(Arg) + AMP + diphosphate. In Caldanaerobacter subterraneus subsp. tengcongensis (strain DSM 15242 / JCM 11007 / NBRC 100824 / MB4) (Thermoanaerobacter tengcongensis), this protein is Arginine--tRNA ligase (argS).